Reading from the N-terminus, the 45-residue chain is Unknown protein from spots 23/28/205 of 2D-PAGE of thylakoid (45 aa).

It localises to the plastid. The protein localises to the chloroplast thylakoid. This chain is Unknown protein from spots 23/28/205 of 2D-PAGE of thylakoid, found in Pisum sativum (Garden pea).